Reading from the N-terminus, the 866-residue chain is E3 ubiquitin-protein ligase RNF216 (866 aa).

Disordered stretches follow at residues 46–117, 131–161, and 211–240; these read LVTP…NPRS, YTESDPLETQNQSSEDSETELLSNLGESAAL, and EFPGPAFPRPEPQQGGISGPSSPQPAHPLG. Acidic residues predominate over residues 55–76; that stretch reads EEEDLDDDVILTEDDSEDDYGE. Residues L80, T89, and K100 each participate in a glycyl lysine isopeptide (Lys-Gly) (interchain with G-Cter in SUMO2) cross-link. Over residues 137-156 the composition is skewed to polar residues; that stretch reads LETQNQSSEDSETELLSNLG. Glycyl lysine isopeptide (Lys-Gly) (interchain with G-Cter in SUMO2) cross-links involve residues K351 and K354. S419 bears the Phosphoserine mark. Glycyl lysine isopeptide (Lys-Gly) (interchain with G-Cter in SUMO2) cross-links involve residues K425, K430, K448, K459, and K485. Residues 475–491 are a coiled coil; sequence VQQEQEFYEQKIKEMAE. The interval 511–728 is TRIAD supradomain; the sequence is QLIECRCCYG…SPGAPCQECS (218 aa). Zn(2+) is bound by residues C515, C518, C537, C540, C605, and C608. The RING-type 1 zinc finger occupies 515–564; the sequence is CRCCYGEFPFEELTQCADAHLFCKECLIRYAQEAVFGSGKLELSCMEGSC. The IBR-type zinc-finger motif lies at 583–648; it reads YKYYERKAEE…LWKEHNGLTC (66 aa). Residue K619 forms a Glycyl lysine isopeptide (Lys-Gly) (interchain with G-Cter in SUMO2) linkage. Zn(2+) is bound by residues C623, C628, C633, C636, H643, and C648. Residues K658 and K666 each participate in a glycyl lysine isopeptide (Lys-Gly) (interchain with G-Cter in SUMO2) cross-link. Zn(2+) contacts are provided by C675 and C678. The RING-type 2; atypical zinc-finger motif lies at 675–703; the sequence is CHKCGTGLIKSEGCNRMSCRCGAQMCYLC. C688 is an active-site residue. Zn(2+) contacts are provided by C693, C695, C700, C703, and H716. S719 carries the post-translational modification Phosphoserine; by MAPK1. C724 serves as a coordination point for Zn(2+). Positions 737–763 form a coiled coil; the sequence is TEDDEKLIEEIQKEAEEEQKRKNGENT. Residues K765 and K773 each participate in a glycyl lysine isopeptide (Lys-Gly) (interchain with G-Cter in SUMO2) cross-link.

In terms of assembly, interacts with UBE2L3 and to some extent with UBE2L6. Interacts with TRAF3, TLR3, TLR4, TLR5 and TLR9. Isoform 3/ZIN binds RIPK1. (Microbial infection) Isoform 3/ZIN binds RIPK1 and HIV Vif. Post-translationally, auto-ubiquitinated. In terms of processing, phosphorylation at Ser-719 enhances acceptor ubiquitin binding and chain-type specificity towards 'Lys-63' di-ubiquitin but not di-ubiquitin with other linkage types. As to expression, ubiquitous, with the highest levels of expression in testis and peripheral blood leukocytes.

Its subcellular location is the cytoplasm. The protein resides in the cytoplasmic vesicle. The protein localises to the clathrin-coated vesicle. The enzyme catalyses S-ubiquitinyl-[E2 ubiquitin-conjugating enzyme]-L-cysteine + [acceptor protein]-L-lysine = [E2 ubiquitin-conjugating enzyme]-L-cysteine + N(6)-ubiquitinyl-[acceptor protein]-L-lysine.. It participates in protein modification; protein ubiquitination. With respect to regulation, allosterically activated by 'Lys-63'-linked di-ubiquitin. E3 ubiquitin ligase which accepts ubiquitin from specific E2 ubiquitin-conjugating enzymes, and then transfers it to substrates promoting their ubiquitination. Plays a role in the regulation of antiviral responses by promoting the degradation of TRAF3, TLR4 and TLR9. In turn, down-regulates NF-kappa-B and IRF3 activation as well as beta interferon production. Also participates in the regulation of autophagy by ubiquitinating BECN1 leading to its degradation and autophagy inhibition. Plays a role in ARC-dependent synaptic plasticity by mediating ARC ubiquitination resulting in its rapid proteasomal degradation. Plays aso an essential role in spermatogenesis and male fertility. Mechanistically, regulates meiosis by promoting the degradation of PRKACB through the ubiquitin-mediated lysosome pathway. Modulates the gonadotropin-releasing hormone signal pathway by affecting the stability of STAU2 that is required for the microtubule-dependent transport of neuronal RNA from the cell body to the dendrite. Its function is as follows. Inhibits TNF and IL-1 mediated activation of NF-kappa-B. Promotes TNF and RIP mediated apoptosis. The polypeptide is E3 ubiquitin-protein ligase RNF216 (RNF216) (Homo sapiens (Human)).